The following is a 277-amino-acid chain: Large ribosomal subunit protein uL2c (277 aa).

Residues 30 to 60 (RKKLTSGQHSGKGRNNRGIITSRHRGGGHKR) form a disordered region. The span at 51–60 (SRHRGGGHKR) shows a compositional bias: basic residues.

Belongs to the universal ribosomal protein uL2 family. Part of the 50S ribosomal subunit.

The protein resides in the plastid. It localises to the chloroplast. The protein is Large ribosomal subunit protein uL2c (rpl2) of Angiopteris evecta (Mule's foot fern).